The primary structure comprises 547 residues: Chaperonin GroEL (547 aa).

ATP is bound by residues T30 to P33, K51, D87 to T91, G415, N479 to A481, and D495. Positions K526–F547 are disordered. The segment covering A535–F547 has biased composition (gly residues).

This sequence belongs to the chaperonin (HSP60) family. Forms a cylinder of 14 subunits composed of two heptameric rings stacked back-to-back. Interacts with the co-chaperonin GroES.

The protein resides in the cytoplasm. It carries out the reaction ATP + H2O + a folded polypeptide = ADP + phosphate + an unfolded polypeptide.. In terms of biological role, together with its co-chaperonin GroES, plays an essential role in assisting protein folding. The GroEL-GroES system forms a nano-cage that allows encapsulation of the non-native substrate proteins and provides a physical environment optimized to promote and accelerate protein folding. This is Chaperonin GroEL from Xylella fastidiosa (strain M12).